Consider the following 311-residue polypeptide: Glutaminase (311 aa).

Residues Ser-66, Asn-116, Glu-162, Asn-169, Tyr-193, Tyr-245, and Val-263 each contribute to the substrate site.

Belongs to the glutaminase family. Homotetramer.

It catalyses the reaction L-glutamine + H2O = L-glutamate + NH4(+). The protein is Glutaminase of Rhodopseudomonas palustris (strain TIE-1).